The sequence spans 551 residues: Xylulose kinase (551 aa).

Substrate is bound by residues His114, Arg185, Asp295, and Asn296. Residues Trp370, 456–457 (GA), and Asn460 each bind ATP.

This sequence belongs to the FGGY kinase family. Monomer.

It carries out the reaction D-xylulose + ATP = D-xylulose 5-phosphate + ADP + H(+). Its function is as follows. Phosphorylates D-xylulose to produce D-xylulose 5-phosphate, a molecule that may play an important role in the regulation of glucose metabolism and lipogenesis. The protein is Xylulose kinase (Xylb) of Mus musculus (Mouse).